The following is a 320-amino-acid chain: Lipoyl synthase (320 aa).

Residues Cys67, Cys72, Cys78, Cys93, Cys97, Cys100, and Ser307 each coordinate [4Fe-4S] cluster. In terms of domain architecture, Radical SAM core spans 79–296; it reads FNHGTATFMI…RTKAEVMGFE (218 aa).

This sequence belongs to the radical SAM superfamily. Lipoyl synthase family. The cofactor is [4Fe-4S] cluster.

It localises to the cytoplasm. The catalysed reaction is [[Fe-S] cluster scaffold protein carrying a second [4Fe-4S](2+) cluster] + N(6)-octanoyl-L-lysyl-[protein] + 2 oxidized [2Fe-2S]-[ferredoxin] + 2 S-adenosyl-L-methionine + 4 H(+) = [[Fe-S] cluster scaffold protein] + N(6)-[(R)-dihydrolipoyl]-L-lysyl-[protein] + 4 Fe(3+) + 2 hydrogen sulfide + 2 5'-deoxyadenosine + 2 L-methionine + 2 reduced [2Fe-2S]-[ferredoxin]. It functions in the pathway protein modification; protein lipoylation via endogenous pathway; protein N(6)-(lipoyl)lysine from octanoyl-[acyl-carrier-protein]: step 2/2. Catalyzes the radical-mediated insertion of two sulfur atoms into the C-6 and C-8 positions of the octanoyl moiety bound to the lipoyl domains of lipoate-dependent enzymes, thereby converting the octanoylated domains into lipoylated derivatives. The sequence is that of Lipoyl synthase from Mannheimia succiniciproducens (strain KCTC 0769BP / MBEL55E).